Here is a 273-residue protein sequence, read N- to C-terminus: 4-hydroxy-tetrahydrodipicolinate reductase (273 aa).

NAD(+) contacts are provided by residues glycine 12–methionine 17 and glutamate 38. Arginine 39 lines the NADP(+) pocket. NAD(+) contacts are provided by residues glycine 102–threonine 104 and alanine 126–phenylalanine 129. Histidine 159 serves as the catalytic Proton donor/acceptor. Histidine 160 contacts (S)-2,3,4,5-tetrahydrodipicolinate. The active-site Proton donor is lysine 163. Glycine 169–threonine 170 contacts (S)-2,3,4,5-tetrahydrodipicolinate.

This sequence belongs to the DapB family. In terms of assembly, homotetramer.

Its subcellular location is the cytoplasm. The catalysed reaction is (S)-2,3,4,5-tetrahydrodipicolinate + NAD(+) + H2O = (2S,4S)-4-hydroxy-2,3,4,5-tetrahydrodipicolinate + NADH + H(+). It carries out the reaction (S)-2,3,4,5-tetrahydrodipicolinate + NADP(+) + H2O = (2S,4S)-4-hydroxy-2,3,4,5-tetrahydrodipicolinate + NADPH + H(+). Its pathway is amino-acid biosynthesis; L-lysine biosynthesis via DAP pathway; (S)-tetrahydrodipicolinate from L-aspartate: step 4/4. Its function is as follows. Catalyzes the conversion of 4-hydroxy-tetrahydrodipicolinate (HTPA) to tetrahydrodipicolinate. This Salmonella typhimurium (strain LT2 / SGSC1412 / ATCC 700720) protein is 4-hydroxy-tetrahydrodipicolinate reductase.